Reading from the N-terminus, the 201-residue chain is ATP-dependent Clp protease proteolytic subunit (201 aa).

Ser-98 serves as the catalytic Nucleophile. His-123 is a catalytic residue.

This sequence belongs to the peptidase S14 family. As to quaternary structure, fourteen ClpP subunits assemble into 2 heptameric rings which stack back to back to give a disk-like structure with a central cavity, resembling the structure of eukaryotic proteasomes.

The protein resides in the cytoplasm. The catalysed reaction is Hydrolysis of proteins to small peptides in the presence of ATP and magnesium. alpha-casein is the usual test substrate. In the absence of ATP, only oligopeptides shorter than five residues are hydrolyzed (such as succinyl-Leu-Tyr-|-NHMec, and Leu-Tyr-Leu-|-Tyr-Trp, in which cleavage of the -Tyr-|-Leu- and -Tyr-|-Trp bonds also occurs).. Its function is as follows. Cleaves peptides in various proteins in a process that requires ATP hydrolysis. Has a chymotrypsin-like activity. Plays a major role in the degradation of misfolded proteins. This Rickettsia peacockii (strain Rustic) protein is ATP-dependent Clp protease proteolytic subunit.